The sequence spans 443 residues: tRNA(Ile2) 2-agmatinylcytidine synthetase TiaS (443 aa).

The protein belongs to the TiaS family.

The protein resides in the cytoplasm. The catalysed reaction is cytidine(34) in tRNA(Ile2) + agmatine + ATP + H2O = 2-agmatinylcytidine(34) in tRNA(Ile2) + AMP + 2 phosphate + 2 H(+). In terms of biological role, ATP-dependent agmatine transferase that catalyzes the formation of 2-agmatinylcytidine (agm2C) at the wobble position (C34) of tRNA(Ile2), converting the codon specificity from AUG to AUA. The chain is tRNA(Ile2) 2-agmatinylcytidine synthetase TiaS from Saccharolobus islandicus (strain L.S.2.15 / Lassen #1) (Sulfolobus islandicus).